The following is a 100-amino-acid chain: Putative pterin-4-alpha-carbinolamine dehydratase (100 aa).

The protein belongs to the pterin-4-alpha-carbinolamine dehydratase family.

The catalysed reaction is (4aS,6R)-4a-hydroxy-L-erythro-5,6,7,8-tetrahydrobiopterin = (6R)-L-erythro-6,7-dihydrobiopterin + H2O. The sequence is that of Putative pterin-4-alpha-carbinolamine dehydratase from Rhodopseudomonas palustris (strain TIE-1).